Reading from the N-terminus, the 354-residue chain is GDSL esterase/lipase At5g03820 (354 aa).

An N-terminal signal peptide occupies residues 1–24 (MKMFIIMLMTFSVIACFYAGVGTG). Residue serine 37 is the Nucleophile of the active site. Asparagine 66, asparagine 100, asparagine 237, asparagine 256, asparagine 257, asparagine 261, and asparagine 321 each carry an N-linked (GlcNAc...) asparagine glycan. Active-site residues include aspartate 329 and histidine 332.

It belongs to the 'GDSL' lipolytic enzyme family.

Its subcellular location is the secreted. The chain is GDSL esterase/lipase At5g03820 from Arabidopsis thaliana (Mouse-ear cress).